Here is a 283-residue protein sequence, read N- to C-terminus: Nucleotide-binding protein IL0393 (283 aa).

8–15 (GRSGSGKT) contacts ATP. GTP is bound at residue 56 to 59 (DVRN).

Belongs to the RapZ-like family.

Displays ATPase and GTPase activities. The protein is Nucleotide-binding protein IL0393 of Idiomarina loihiensis (strain ATCC BAA-735 / DSM 15497 / L2-TR).